The chain runs to 65 residues: 7 kDa A-type inclusion protein (65 aa).

A compositionally biased stretch (polar residues) spans 1–20; sequence MSNQNIPQLSEYQTSVSQVA. The disordered stretch occupies residues 1–31; the sequence is MSNQNIPQLSEYQTSVSQVAVTPPPKPETPQ.

The sequence is that of 7 kDa A-type inclusion protein from Vaccinia virus (strain Copenhagen) (VACV).